The sequence spans 144 residues: Universal stress protein A (144 aa).

This sequence belongs to the universal stress protein A family. In terms of assembly, homodimer.

It is found in the cytoplasm. In terms of biological role, required for resistance to DNA-damaging agents. The protein is Universal stress protein A (uspA) of Escherichia coli O6:H1 (strain CFT073 / ATCC 700928 / UPEC).